The primary structure comprises 72 residues: Protein LITTLE ZIPPER 4 (72 aa).

A coiled-coil region spans residues 14–44 (YIIKENERLRKKAQILNQENQQLLFELKQKL). Residues 42–72 (QKLSKTKNSSGSNQGNNNNNNNLSSSSSASG) form a disordered region. A compositionally biased stretch (low complexity) spans 49 to 72 (NSSGSNQGNNNNNNNLSSSSSASG).

In terms of assembly, interacts with REV.

Competitive inhibitor of the HD-ZIPIII transcription factors in shoot apical meristem (SAM) development. Acts by forming non-functional heterodimers. Part of a negative feedback loop. Essential for proper functioning of stem cells in the SAM. This chain is Protein LITTLE ZIPPER 4, found in Arabidopsis thaliana (Mouse-ear cress).